We begin with the raw amino-acid sequence, 898 residues long: Alanine--tRNA ligase (898 aa).

Zn(2+) contacts are provided by histidine 589, histidine 593, cysteine 693, and histidine 697.

This sequence belongs to the class-II aminoacyl-tRNA synthetase family. It depends on Zn(2+) as a cofactor.

It localises to the cytoplasm. The catalysed reaction is tRNA(Ala) + L-alanine + ATP = L-alanyl-tRNA(Ala) + AMP + diphosphate. Functionally, catalyzes the attachment of alanine to tRNA(Ala) in a two-step reaction: alanine is first activated by ATP to form Ala-AMP and then transferred to the acceptor end of tRNA(Ala). Also edits incorrectly charged Ser-tRNA(Ala) and Gly-tRNA(Ala) via its editing domain. The sequence is that of Alanine--tRNA ligase from Methanothermobacter thermautotrophicus (strain ATCC 29096 / DSM 1053 / JCM 10044 / NBRC 100330 / Delta H) (Methanobacterium thermoautotrophicum).